A 332-amino-acid chain; its full sequence is Isopentenyl-diphosphate delta-isomerase (332 aa).

6–7 contributes to the substrate binding site; sequence RK. Residues 65-67, S95, and N123 each bind FMN; that span reads AMT. Position 95-97 (95-97) interacts with substrate; it reads SGR. Q157 is a binding site for substrate. E158 is a Mg(2+) binding site. Residues K187, T217, 264–266, A285, and 285–286 each bind FMN; these read GVY and AR.

Belongs to the IPP isomerase type 2 family. As to quaternary structure, homooctamer. Dimer of tetramers. FMN is required as a cofactor. The cofactor is NADPH. Mg(2+) serves as cofactor.

Its subcellular location is the cytoplasm. It catalyses the reaction isopentenyl diphosphate = dimethylallyl diphosphate. Competitively inhibited by N,N-dimethyl-2-amino-1-ethyl diphosphate (NIPP) and isopentyl diphosphate. Its function is as follows. Involved in the biosynthesis of isoprenoids. Catalyzes the 1,3-allylic rearrangement of the homoallylic substrate isopentenyl (IPP) to its allylic isomer, dimethylallyl diphosphate (DMAPP). This Thermus thermophilus (strain ATCC BAA-163 / DSM 7039 / HB27) protein is Isopentenyl-diphosphate delta-isomerase.